A 242-amino-acid chain; its full sequence is Succinyl-CoA:3-ketoacid coenzyme A transferase subunit A (242 aa).

33–39 (GGFGLCG) is a binding site for CoA.

Belongs to the 3-oxoacid CoA-transferase subunit A family. Heterodimer of a subunit A and a subunit B.

The enzyme catalyses a 3-oxo acid + succinyl-CoA = a 3-oxoacyl-CoA + succinate. It participates in bacterial outer membrane biogenesis; lipopolysaccharide biosynthesis. This chain is Succinyl-CoA:3-ketoacid coenzyme A transferase subunit A (lpsI), found in Xanthomonas campestris pv. campestris (strain B100).